The following is a 283-amino-acid chain: Glutamate racemase (283 aa).

Substrate is bound by residues 28 to 29 (DS) and 60 to 61 (YG). C92 functions as the Proton donor/acceptor in the catalytic mechanism. 93 to 94 (NT) is a binding site for substrate. C204 serves as the catalytic Proton donor/acceptor. 205–206 (TH) contacts substrate.

The protein belongs to the aspartate/glutamate racemases family.

The enzyme catalyses L-glutamate = D-glutamate. The protein operates within cell wall biogenesis; peptidoglycan biosynthesis. In terms of biological role, provides the (R)-glutamate required for cell wall biosynthesis. This chain is Glutamate racemase, found in Salmonella choleraesuis (strain SC-B67).